The primary structure comprises 444 residues: Methylenetetrahydrofolate--tRNA-(uracil-5-)-methyltransferase TrmFO (444 aa).

9 to 14 (GAGMAG) is an FAD binding site.

Belongs to the MnmG family. TrmFO subfamily. The cofactor is FAD.

The protein resides in the cytoplasm. The catalysed reaction is uridine(54) in tRNA + (6R)-5,10-methylene-5,6,7,8-tetrahydrofolate + NADH + H(+) = 5-methyluridine(54) in tRNA + (6S)-5,6,7,8-tetrahydrofolate + NAD(+). It catalyses the reaction uridine(54) in tRNA + (6R)-5,10-methylene-5,6,7,8-tetrahydrofolate + NADPH + H(+) = 5-methyluridine(54) in tRNA + (6S)-5,6,7,8-tetrahydrofolate + NADP(+). Its function is as follows. Catalyzes the folate-dependent formation of 5-methyl-uridine at position 54 (M-5-U54) in all tRNAs. The sequence is that of Methylenetetrahydrofolate--tRNA-(uracil-5-)-methyltransferase TrmFO from Cereibacter sphaeroides (strain ATCC 17025 / ATH 2.4.3) (Rhodobacter sphaeroides).